Reading from the N-terminus, the 49-residue chain is SPbeta prophage-derived uncharacterized protein YorN (49 aa).

In Bacillus subtilis (strain 168), this protein is SPbeta prophage-derived uncharacterized protein YorN (yorN).